A 374-amino-acid polypeptide reads, in one-letter code: Biotin synthase (374 aa).

The 228-residue stretch at 51–278 (NTVKVNYLVN…DTEIRIAGGR (228 aa)) folds into the Radical SAM core domain. Residues Cys-66, Cys-70, and Cys-73 each contribute to the [4Fe-4S] cluster site. 4 residues coordinate [2Fe-2S] cluster: Cys-110, Cys-143, Cys-203, and Arg-273. A disordered region spans residues 346-374 (IAGGTSVAGSAPDPAIRRRGAGTDVPANA).

Belongs to the radical SAM superfamily. Biotin synthase family. As to quaternary structure, homodimer. Requires [4Fe-4S] cluster as cofactor. [2Fe-2S] cluster serves as cofactor.

The enzyme catalyses (4R,5S)-dethiobiotin + (sulfur carrier)-SH + 2 reduced [2Fe-2S]-[ferredoxin] + 2 S-adenosyl-L-methionine = (sulfur carrier)-H + biotin + 2 5'-deoxyadenosine + 2 L-methionine + 2 oxidized [2Fe-2S]-[ferredoxin]. It participates in cofactor biosynthesis; biotin biosynthesis; biotin from 7,8-diaminononanoate: step 2/2. Catalyzes the conversion of dethiobiotin (DTB) to biotin by the insertion of a sulfur atom into dethiobiotin via a radical-based mechanism. This is Biotin synthase from Nocardioides sp. (strain ATCC BAA-499 / JS614).